A 339-amino-acid chain; its full sequence is DNA-directed RNA polymerase subunit alpha (339 aa).

The tract at residues 1 to 233 (MVREEITGST…DLFLPFIHTE (233 aa)) is alpha N-terminal domain (alpha-NTD). Residues 266–339 (GIPLNCIFID…IDLPKNKFSL (74 aa)) are alpha C-terminal domain (alpha-CTD).

The protein belongs to the RNA polymerase alpha chain family. As to quaternary structure, in plastids the minimal PEP RNA polymerase catalytic core is composed of four subunits: alpha, beta, beta', and beta''. When a (nuclear-encoded) sigma factor is associated with the core the holoenzyme is formed, which can initiate transcription.

It is found in the plastid. It localises to the chloroplast. It carries out the reaction RNA(n) + a ribonucleoside 5'-triphosphate = RNA(n+1) + diphosphate. Its function is as follows. DNA-dependent RNA polymerase catalyzes the transcription of DNA into RNA using the four ribonucleoside triphosphates as substrates. The protein is DNA-directed RNA polymerase subunit alpha of Saccharum hybrid (Sugarcane).